A 334-amino-acid polypeptide reads, in one-letter code: Beta-glucanase (334 aa).

Positions 1–27 (MKNRVISLLMASLLLVLSVIVAPFYKA) are cleaved as a signal peptide. Residues 28-248 (EAATVVNTPF…YVKYYPNGVP (221 aa)) enclose the GH16 domain. E136 serves as the catalytic Nucleophile. E140 acts as the Proton donor in catalysis. The region spanning 267 to 334 (NLPLKGDVNG…RYLIRAIPSL (68 aa)) is the Dockerin domain.

It belongs to the glycosyl hydrolase 16 family. May form part of a multienzyme complex (cellulosome).

The catalysed reaction is Hydrolysis of (1-&gt;4)-beta-D-glucosidic linkages in beta-D-glucans containing (1-&gt;3)- and (1-&gt;4)-bonds.. This is Beta-glucanase (licB) from Acetivibrio thermocellus (strain ATCC 27405 / DSM 1237 / JCM 9322 / NBRC 103400 / NCIMB 10682 / NRRL B-4536 / VPI 7372) (Clostridium thermocellum).